The following is a 331-amino-acid chain: Small ribosomal subunit protein uS2 (331 aa).

This sequence belongs to the universal ribosomal protein uS2 family.

In Rhodopseudomonas palustris (strain HaA2), this protein is Small ribosomal subunit protein uS2.